A 154-amino-acid polypeptide reads, in one-letter code: Superoxide dismutase [Cu-Zn] (154 aa).

Positions 47, 49, and 64 each coordinate Cu cation. A disulfide bridge links Cys-58 with Cys-147. Zn(2+) is bound by residues His-64, His-72, His-81, and Asp-84. His-121 provides a ligand contact to Cu cation. Arg-144 serves as a coordination point for substrate.

Belongs to the Cu-Zn superoxide dismutase family. Homodimer. Cu cation is required as a cofactor. Zn(2+) serves as cofactor.

It is found in the cytoplasm. It carries out the reaction 2 superoxide + 2 H(+) = H2O2 + O2. Its function is as follows. Destroys radicals which are normally produced within the cells and which are toxic to biological systems. The chain is Superoxide dismutase [Cu-Zn] (sodC) from Aspergillus fumigatus (strain ATCC MYA-4609 / CBS 101355 / FGSC A1100 / Af293) (Neosartorya fumigata).